The chain runs to 205 residues: Ras-related protein RABB1a (205 aa).

13–20 (GDTGVGKS) is a binding site for GTP. Residues 35–43 (HDLTIGVEF) carry the Effector region motif. Residues 61 to 65 (DTAGQ), 119 to 122 (NKCD), and 149 to 150 (SA) each bind GTP. Positions 179-205 (ANEPGITPGPFGGKDASSSQQRRGCCG) are disordered. Polar residues predominate over residues 194–205 (ASSSQQRRGCCG). Residues C203 and C204 are each lipidated (S-geranylgeranyl cysteine).

This sequence belongs to the small GTPase superfamily. Rab family.

It is found in the cell membrane. In terms of biological role, intracellular vesicle trafficking and protein transport. The sequence is that of Ras-related protein RABB1a (RABB1A) from Arabidopsis thaliana (Mouse-ear cress).